Reading from the N-terminus, the 404-residue chain is Cysteine desulfurase IscS (404 aa).

Residues 75 to 76, N155, Q183, and 203 to 205 each bind pyridoxal 5'-phosphate; these read AT and SGH. K206 carries the N6-(pyridoxal phosphate)lysine modification. T243 contacts pyridoxal 5'-phosphate. Residue C328 is the Cysteine persulfide intermediate of the active site. Residue C328 coordinates [2Fe-2S] cluster.

The protein belongs to the class-V pyridoxal-phosphate-dependent aminotransferase family. NifS/IscS subfamily. In terms of assembly, homodimer. Forms a heterotetramer with IscU, interacts with other sulfur acceptors. Pyridoxal 5'-phosphate serves as cofactor.

It is found in the cytoplasm. The enzyme catalyses (sulfur carrier)-H + L-cysteine = (sulfur carrier)-SH + L-alanine. It functions in the pathway cofactor biosynthesis; iron-sulfur cluster biosynthesis. In terms of biological role, master enzyme that delivers sulfur to a number of partners involved in Fe-S cluster assembly, tRNA modification or cofactor biosynthesis. Catalyzes the removal of elemental sulfur atoms from cysteine to produce alanine. Functions as a sulfur delivery protein for Fe-S cluster synthesis onto IscU, an Fe-S scaffold assembly protein, as well as other S acceptor proteins. In Shewanella frigidimarina (strain NCIMB 400), this protein is Cysteine desulfurase IscS.